Here is a 412-residue protein sequence, read N- to C-terminus: Serine hydroxymethyltransferase (412 aa).

(6S)-5,6,7,8-tetrahydrofolate contacts are provided by residues Leu-116 and 120–122; that span reads GHL. Position 225 is an N6-(pyridoxal phosphate)lysine (Lys-225). (6S)-5,6,7,8-tetrahydrofolate is bound by residues Glu-241 and 350-352; that span reads SPF.

This sequence belongs to the SHMT family. As to quaternary structure, homodimer. Pyridoxal 5'-phosphate serves as cofactor.

The protein resides in the cytoplasm. It carries out the reaction (6R)-5,10-methylene-5,6,7,8-tetrahydrofolate + glycine + H2O = (6S)-5,6,7,8-tetrahydrofolate + L-serine. It participates in one-carbon metabolism; tetrahydrofolate interconversion. It functions in the pathway amino-acid biosynthesis; glycine biosynthesis; glycine from L-serine: step 1/1. Catalyzes the reversible interconversion of serine and glycine with tetrahydrofolate (THF) serving as the one-carbon carrier. This reaction serves as the major source of one-carbon groups required for the biosynthesis of purines, thymidylate, methionine, and other important biomolecules. Also exhibits THF-independent aldolase activity toward beta-hydroxyamino acids, producing glycine and aldehydes, via a retro-aldol mechanism. The chain is Serine hydroxymethyltransferase from Enterococcus faecalis (strain ATCC 700802 / V583).